The primary structure comprises 631 residues: Dolichyl-diphosphooligosaccharide--protein glycosyltransferase subunit 2 (631 aa).

Residues 1–22 form the signal peptide; it reads MAPPGSSAVFLLALTITASVQA. Over 23 to 540 the chain is Lumenal; that stretch reads LTPTHYLTKQ…REPEKRPPTV (518 aa). The N-linked (GlcNAc...) asparagine glycan is linked to Asn-106. Lys-154 is covalently cross-linked (Glycyl lysine isopeptide (Lys-Gly) (interchain with G-Cter in ubiquitin)). A helical transmembrane segment spans residues 541-561; it reads VSNTFTALILSPLLLLFALWI. Residues 562-571 are Cytoplasmic-facing; it reads RIGANVSNFT. A helical transmembrane segment spans residues 572–592; the sequence is FAPSTVIFHLGHAAMLGLMYI. Over 593 to 596 the chain is Lumenal; that stretch reads YWTQ. The chain crosses the membrane as a helical span at residues 597–617; it reads LNMFQTLKYLAVLGTVTFLAG. Over 618-631 the chain is Cytoplasmic; the sequence is NRMLAQHAVKRTAH.

It belongs to the SWP1 family. Component of the oligosaccharyltransferase (OST) complex. OST exists in two different complex forms which contain common core subunits RPN1, RPN2, OST48, OST4, DAD1 and TMEM258, either STT3A or STT3B as catalytic subunits, and form-specific accessory subunits. STT3A complex assembly occurs through the formation of 3 subcomplexes. Subcomplex 1 contains RPN1 and TMEM258, subcomplex 2 contains the STT3A-specific subunits STT3A, DC2/OSTC, and KCP2 as well as the core subunit OST4, and subcomplex 3 contains RPN2, DAD1, and OST48. The STT3A complex can form stable complexes with the Sec61 complex or with both the Sec61 and TRAP complexes. Interacts with DDI2. Interacts with TMEM35A/NACHO.

The protein resides in the endoplasmic reticulum. The protein localises to the endoplasmic reticulum membrane. It functions in the pathway protein modification; protein glycosylation. Its function is as follows. Subunit of the oligosaccharyl transferase (OST) complex that catalyzes the initial transfer of a defined glycan (Glc(3)Man(9)GlcNAc(2) in eukaryotes) from the lipid carrier dolichol-pyrophosphate to an asparagine residue within an Asn-X-Ser/Thr consensus motif in nascent polypeptide chains, the first step in protein N-glycosylation. N-glycosylation occurs cotranslationally and the complex associates with the Sec61 complex at the channel-forming translocon complex that mediates protein translocation across the endoplasmic reticulum (ER). All subunits are required for a maximal enzyme activity. This Mus musculus (Mouse) protein is Dolichyl-diphosphooligosaccharide--protein glycosyltransferase subunit 2.